Here is a 401-residue protein sequence, read N- to C-terminus: Argininosuccinate synthase (401 aa).

9 to 17 (AYSGGLDTS) contacts ATP. Tyr88 is a binding site for L-citrulline. Residue Gly118 participates in ATP binding. L-aspartate contacts are provided by Thr120, Asn124, and Asp125. An L-citrulline-binding site is contributed by Asn124. L-citrulline contacts are provided by Arg128, Ser176, Ser185, Glu261, and Tyr273.

Belongs to the argininosuccinate synthase family. Type 1 subfamily. Homotetramer.

The protein localises to the cytoplasm. The enzyme catalyses L-citrulline + L-aspartate + ATP = 2-(N(omega)-L-arginino)succinate + AMP + diphosphate + H(+). It functions in the pathway amino-acid biosynthesis; L-arginine biosynthesis; L-arginine from L-ornithine and carbamoyl phosphate: step 2/3. This Symbiobacterium thermophilum (strain DSM 24528 / JCM 14929 / IAM 14863 / T) protein is Argininosuccinate synthase.